The sequence spans 868 residues: DNA topoisomerase 1 (868 aa).

One can recognise a Toprim domain in the interval 3–148 (KSLVIVESPA…RFSRVVFNEI (146 aa)). Residues Glu-9 and Asp-117 each contribute to the Mg(2+) site. In terms of domain architecture, Topo IA-type catalytic spans 164-581 (NLDRVNAQQT…QFFKDFSQQL (418 aa)). The interval 198–203 (SAGRVQ) is interaction with DNA. Tyr-325 functions as the O-(5'-phospho-DNA)-tyrosine intermediate in the catalytic mechanism. C4-type zinc fingers lie at residues 605-636 (CPTC…KERC), 667-694 (CPKC…NPNC), and 716-739 (CDKC…CTSC).

It belongs to the type IA topoisomerase family. Monomer. Requires Mg(2+) as cofactor.

It catalyses the reaction ATP-independent breakage of single-stranded DNA, followed by passage and rejoining.. Functionally, releases the supercoiling and torsional tension of DNA, which is introduced during the DNA replication and transcription, by transiently cleaving and rejoining one strand of the DNA duplex. Introduces a single-strand break via transesterification at a target site in duplex DNA. The scissile phosphodiester is attacked by the catalytic tyrosine of the enzyme, resulting in the formation of a DNA-(5'-phosphotyrosyl)-enzyme intermediate and the expulsion of a 3'-OH DNA strand. The free DNA strand then undergoes passage around the unbroken strand, thus removing DNA supercoils. Finally, in the religation step, the DNA 3'-OH attacks the covalent intermediate to expel the active-site tyrosine and restore the DNA phosphodiester backbone. This is DNA topoisomerase 1 from Pasteurella multocida (strain Pm70).